Reading from the N-terminus, the 151-residue chain is Methylated-DNA--protein-cysteine methyltransferase (151 aa).

Cys-119 (nucleophile; methyl group acceptor) is an active-site residue.

This sequence belongs to the MGMT family.

It localises to the cytoplasm. The enzyme catalyses a 6-O-methyl-2'-deoxyguanosine in DNA + L-cysteinyl-[protein] = S-methyl-L-cysteinyl-[protein] + a 2'-deoxyguanosine in DNA. It catalyses the reaction a 4-O-methyl-thymidine in DNA + L-cysteinyl-[protein] = a thymidine in DNA + S-methyl-L-cysteinyl-[protein]. Its function is as follows. Involved in the cellular defense against the biological effects of O6-methylguanine (O6-MeG) and O4-methylthymine (O4-MeT) in DNA. Repairs the methylated nucleobase in DNA by stoichiometrically transferring the methyl group to a cysteine residue in the enzyme. This is a suicide reaction: the enzyme is irreversibly inactivated. The protein is Methylated-DNA--protein-cysteine methyltransferase of Saccharolobus islandicus (strain Y.N.15.51 / Yellowstone #2) (Sulfolobus islandicus).